Here is a 389-residue protein sequence, read N- to C-terminus: Phospho-N-acetylmuramoyl-pentapeptide-transferase (389 aa).

11 helical membrane-spanning segments follow: residues 21–41 (YITM…LVAG), 71–91 (TPTM…LLWA), 97–117 (FVWV…MDDY), 134–154 (FFWQ…AVSA), 167–187 (WVSS…VPFF), 190–210 (VSYP…IVGT), 222–242 (GLAI…AYVV), 259–279 (AAEL…FLWF), 286–306 (VFMG…IAVI), 311–331 (IVLF…MMQV), and 366–386 (QVVV…LSTL).

Belongs to the glycosyltransferase 4 family. MraY subfamily. Requires Mg(2+) as cofactor.

The protein localises to the cell inner membrane. The catalysed reaction is UDP-N-acetyl-alpha-D-muramoyl-L-alanyl-gamma-D-glutamyl-meso-2,6-diaminopimeloyl-D-alanyl-D-alanine + di-trans,octa-cis-undecaprenyl phosphate = di-trans,octa-cis-undecaprenyl diphospho-N-acetyl-alpha-D-muramoyl-L-alanyl-D-glutamyl-meso-2,6-diaminopimeloyl-D-alanyl-D-alanine + UMP. Its pathway is cell wall biogenesis; peptidoglycan biosynthesis. In terms of biological role, catalyzes the initial step of the lipid cycle reactions in the biosynthesis of the cell wall peptidoglycan: transfers peptidoglycan precursor phospho-MurNAc-pentapeptide from UDP-MurNAc-pentapeptide onto the lipid carrier undecaprenyl phosphate, yielding undecaprenyl-pyrophosphoryl-MurNAc-pentapeptide, known as lipid I. This chain is Phospho-N-acetylmuramoyl-pentapeptide-transferase, found in Bordetella petrii (strain ATCC BAA-461 / DSM 12804 / CCUG 43448).